Consider the following 287-residue polypeptide: Glycine--tRNA ligase alpha subunit (287 aa).

Belongs to the class-II aminoacyl-tRNA synthetase family. Tetramer of two alpha and two beta subunits.

It localises to the cytoplasm. It carries out the reaction tRNA(Gly) + glycine + ATP = glycyl-tRNA(Gly) + AMP + diphosphate. In Petrotoga mobilis (strain DSM 10674 / SJ95), this protein is Glycine--tRNA ligase alpha subunit.